The sequence spans 64 residues: Large ribosomal subunit protein bL35 (64 aa).

Residues 1 to 22 are disordered; that stretch reads MPKAKTHSGASKRFRRTGTGKI.

This sequence belongs to the bacterial ribosomal protein bL35 family.

In Mycobacterium tuberculosis (strain ATCC 25177 / H37Ra), this protein is Large ribosomal subunit protein bL35.